The chain runs to 155 residues: Ribosomal RNA large subunit methyltransferase H (155 aa).

S-adenosyl-L-methionine contacts are provided by residues Leu72, Gly103, and 122–127; that span reads LSPLTL.

This sequence belongs to the RNA methyltransferase RlmH family. Homodimer.

The protein localises to the cytoplasm. It carries out the reaction pseudouridine(1915) in 23S rRNA + S-adenosyl-L-methionine = N(3)-methylpseudouridine(1915) in 23S rRNA + S-adenosyl-L-homocysteine + H(+). In terms of biological role, specifically methylates the pseudouridine at position 1915 (m3Psi1915) in 23S rRNA. This Haemophilus influenzae (strain PittGG) protein is Ribosomal RNA large subunit methyltransferase H.